The following is a 1094-amino-acid chain: MNVNQSVPPVPPFGQPQPIYPGYHQSSYGGQSGSTAPAIPYGAYNGPVPGYQQTPPQGMSRAPPSSGAPPASTAQAPCGQAAYGQFGQGDVQNGPSSTVQMQRLPGSQPFGSPLAPVGNQPPVLQPYGPPPTSAQVATQLSGMQISGAVAPAPPSSGLGFGPPTSLASASGSFPNSGLYGSYPQGQAPPLSQAQGHPGIQTPQRSAPSQASSFTPPASGGPRLPSMTGPLLPGQSFGGPSVSQPNHVSSPPQALPPGTQMTGPLGPLPPMHSPQQPGYQPQQNGSFGPARGPQSNYGGPYPAAPTFGSQPGPPQPLPPKRLDPDAIPSPIQVIEDDRNNRGTEPFVTGVRGQVPPLVTTNFLVKDQGNASPRYIRCTSYNIPCTSDMAKQAQVPLAAVIKPLARLPPEEASPYVVDHGESGPLRCNRCKAYMCPFMQFIEGGRRFQCCFCSCINDVPPQYFQHLDHTGKRVDAYDRPELSLGSYEFLATVDYCKNNKFPSPPAFIFMIDVSYNAIRTGLVRLLCEELKSLLDFLPREGGAEESAIRVGFVTYNKVLHFYNVKSSLAQPQMMVVSDVADMFVPLLDGFLVNVNESRAVITSLLDQIPEMFADTRETETVFVPVIQAGMEALKAAECAGKLFLFHTSLPIAEAPGKLKNRDDRKLINTDKEKTLFQPQTGAYQTLAKECVAQGCCVDLFLFPNQYVDVATLSVVPQLTGGSVYKYASFQVENDQERFLSDLRRDVQKVVGFDAVMRVRTSTGIRAVDFFGAFYMSNTTDVELAGLDGDKTVTVEFKHDDRLNEESGALLQCALLYTSCAGQRRLRIHNLALNCCTQLADLYRNCETDTLINYMAKFAYRGVLNSPVKAVRDTLITQCAQILACYRKNCASPSSAGQLILPECMKLLPVYLNCVLKSDVLQPGAEVTTDDRAYVRQLVTSMDVTETNVFFYPRLLPLTKSPVESTTEPPAVRASEERLSNGDIYLLENGLNLFLWVGASVQQGVVQSLFSVSSFSQITSGLSVLPVLDNPLSKKVRGLIDSLRAQRSRYMKLTVVKQEDKMEMLFKHFLVEDKSLSGGASYVDFLCHMHKEIRQLLS.

Residues 1 to 338 (MNVNQSVPPV…PIQVIEDDRN (338 aa)) form a disordered region. Residues 8–19 (PPVPPFGQPQPI) are compositionally biased toward pro residues. Composition is skewed to low complexity over residues 20-29 (YPGYHQSSYG) and 60-77 (SRAP…AQAP). The span at 90 to 101 (DVQNGPSSTVQM) shows a compositional bias: polar residues. The span at 123-132 (VLQPYGPPPT) shows a compositional bias: pro residues. 4 stretches are compositionally biased toward polar residues: residues 133 to 144 (SAQVATQLSGMQ), 165 to 175 (SLASASGSFPN), 189 to 215 (PLSQ…SFTP), and 240 to 251 (SVSQPNHVSSPP). Thr-214 bears the Phosphothreonine mark. A compositionally biased stretch (low complexity) spans 273-282 (PQQPGYQPQQ). Zn(2+) is bound by residues Cys-425, Cys-428, Cys-447, and Cys-450. Positions 425–450 (CNRCKAYMCPFMQFIEGGRRFQCCFC) are zinc finger-like. Residues 962–1034 (TTEPPAVRAS…DNPLSKKVRG (73 aa)) form a Gelsolin-like repeat.

This sequence belongs to the SEC23/SEC24 family. SEC24 subfamily. As to quaternary structure, COPII is composed of at least five proteins: the Sec23/24 complex, the Sec13/31 complex and Sar1. Interacts with TMED2 and TMED10. Interacts with GOSR2 (via IxM motif) and STX5 (via IxM motif); recruits GOSR2 and STX5 into COPII-coated vesicles. Interacts with DDHD1. Interacts with STING1; promoting STING1 translocation to the COPII vesicles. In terms of tissue distribution, ubiquitous.

The protein resides in the cytoplasmic vesicle. It localises to the COPII-coated vesicle membrane. The protein localises to the endoplasmic reticulum membrane. Its subcellular location is the cytoplasm. It is found in the cytosol. Functionally, component of the coat protein complex II (COPII) which promotes the formation of transport vesicles from the endoplasmic reticulum (ER). The coat has two main functions, the physical deformation of the endoplasmic reticulum membrane into vesicles and the selection of cargo molecules for their transport to the Golgi complex. Plays a central role in cargo selection within the COPII complex and together with SEC24D may have a different specificity compared to SEC24A and SEC24B. May more specifically package GPI-anchored proteins through the cargo receptor TMED10. May also be specific for IxM motif-containing cargos like the SNAREs GOSR2 and STX5. The sequence is that of Protein transport protein Sec24C from Homo sapiens (Human).